Consider the following 490-residue polypeptide: UDP-N-acetylmuramate--L-alanine ligase (490 aa).

ATP is bound at residue 122–128 (GTHGKTS).

The protein belongs to the MurCDEF family.

The protein resides in the cytoplasm. The catalysed reaction is UDP-N-acetyl-alpha-D-muramate + L-alanine + ATP = UDP-N-acetyl-alpha-D-muramoyl-L-alanine + ADP + phosphate + H(+). The protein operates within cell wall biogenesis; peptidoglycan biosynthesis. Functionally, cell wall formation. This Mycobacteroides abscessus (strain ATCC 19977 / DSM 44196 / CCUG 20993 / CIP 104536 / JCM 13569 / NCTC 13031 / TMC 1543 / L948) (Mycobacterium abscessus) protein is UDP-N-acetylmuramate--L-alanine ligase.